Reading from the N-terminus, the 1028-residue chain is Beta-galactosidase (1028 aa).

Substrate is bound by residues asparagine 104 and aspartate 203. Aspartate 203 is a binding site for Na(+). Residues glutamate 418, histidine 420, and glutamate 463 each contribute to the Mg(2+) site. Residues glutamate 463 and 539 to 542 (EYAH) contribute to the substrate site. Residue glutamate 463 is the Proton donor of the active site. Glutamate 539 functions as the Nucleophile in the catalytic mechanism. Residue asparagine 599 coordinates Mg(2+). Na(+) is bound by residues phenylalanine 603 and asparagine 606. Substrate-binding residues include asparagine 606 and tryptophan 1004.

This sequence belongs to the glycosyl hydrolase 2 family. As to quaternary structure, homodimer. The cofactor is Mg(2+). It depends on Mn(2+) as a cofactor. Fe cation is required as a cofactor. Requires Na(+) as cofactor. K(+) serves as cofactor.

It catalyses the reaction Hydrolysis of terminal non-reducing beta-D-galactose residues in beta-D-galactosides.. Completely inhibited by Hg(2+), Cu(2+) Ag(2+), and partially inhibited by Zn(2+), imidazole and EDTA. Activated by Ca(2+), Co(2+), Ni(2+). Its function is as follows. This beta-galactosidase is also able to catalyze glycosyl transfer to a series of acceptors, including hexose, pentose, beta- or alpha-disaccharides, hexahydroxy alcohol, cyclitol, and aromatic glycosides, resulting in the production of galacto-oligosaccharides (GOS). The sequence is that of Beta-galactosidase (lacZ) from Enterobacter agglomerans (Erwinia herbicola).